The primary structure comprises 105 residues: uncharacterized protein (105 aa).

Positions 58-105 (YRKKKPNHSRDNPRINSNLSTNYAQAKSVERSRSNSLNSGPNPLENAT) are disordered. 2 stretches are compositionally biased toward polar residues: residues 71–82 (RINSNLSTNYAQ) and 91–105 (SNSL…ENAT).

Its subcellular location is the mitochondrion. This is an uncharacterized protein from Arabidopsis thaliana (Mouse-ear cress).